Consider the following 1040-residue polypeptide: Probable starch synthase 4, chloroplastic/amyloplastic (1040 aa).

Residues 1–42 (MTTKLSSFCFLTHGLAGISCEREHGSSRRFFYLPSRRLVSTS) constitute a chloroplast transit peptide. Residues 43–142 (CKMRQQRGFD…KSKTAKKKGE (100 aa)) are disordered. Composition is skewed to basic and acidic residues over residues 52 to 61 (DSSKRQEVKK) and 112 to 124 (NHAD…KDDI). Residues 187–466 (ELMTMIRSAE…EESKKKSRDE (280 aa)) are a coiled coil. The ADP site is built by K556, G559, and D562. The (1,4-alpha-D-glucosyl)n site is built by W679 and Q680. R849, K854, K906, D908, Y916, L933, and T934 together coordinate ADP.

This sequence belongs to the glycosyltransferase 1 family. Bacterial/plant glycogen synthase subfamily. In terms of assembly, interacts with PTST2. Interacts with PII1; the interaction is essential for the initiation of starch granules biosynthesis in leaf chloroplasts. Expressed in leaves and flowers.

The protein resides in the plastid. The protein localises to the chloroplast. Its subcellular location is the amyloplast. It is found in the chloroplast stroma. It catalyses the reaction [(1-&gt;4)-alpha-D-glucosyl](n) + ADP-alpha-D-glucose = [(1-&gt;4)-alpha-D-glucosyl](n+1) + ADP + H(+). The protein operates within glycan biosynthesis; starch biosynthesis. Probably involved in the priming of starch granule formation. May play a regulatory role in the control of starch accumulation in plastids. Is necessary and sufficient to establish the correct number of starch granules observed in chloroplasts. This chain is Probable starch synthase 4, chloroplastic/amyloplastic, found in Arabidopsis thaliana (Mouse-ear cress).